The following is a 161-amino-acid chain: Cyclic pyranopterin monophosphate synthase (161 aa).

Substrate is bound by residues 73–75 (LCH) and 110–111 (ME). Asp-125 is an active-site residue.

Belongs to the MoaC family. Homohexamer; trimer of dimers.

The enzyme catalyses (8S)-3',8-cyclo-7,8-dihydroguanosine 5'-triphosphate = cyclic pyranopterin phosphate + diphosphate. It participates in cofactor biosynthesis; molybdopterin biosynthesis. Functionally, catalyzes the conversion of (8S)-3',8-cyclo-7,8-dihydroguanosine 5'-triphosphate to cyclic pyranopterin monophosphate (cPMP). This chain is Cyclic pyranopterin monophosphate synthase, found in Pseudomonas syringae pv. tomato (strain ATCC BAA-871 / DC3000).